The chain runs to 354 residues: Holliday junction branch migration complex subunit RuvB (354 aa).

The tract at residues 4–190 (TDKLAAERII…FGIVARLEFY (187 aa)) is large ATPase domain (RuvB-L). Residues leucine 29, arginine 30, glycine 71, lysine 74, threonine 75, threonine 76, 137–139 (EDY), arginine 180, tyrosine 190, and arginine 227 contribute to the ATP site. Threonine 75 is a Mg(2+) binding site. The small ATPAse domain (RuvB-S) stretch occupies residues 191-261 (DADQLARIVR…VADAALAMLD (71 aa)). The tract at residues 264 to 354 (PVGFDLMDRK…RGMWDTPAGK (91 aa)) is head domain (RuvB-H). Residues arginine 300, arginine 319, and arginine 324 each contribute to the DNA site.

This sequence belongs to the RuvB family. As to quaternary structure, homohexamer. Forms an RuvA(8)-RuvB(12)-Holliday junction (HJ) complex. HJ DNA is sandwiched between 2 RuvA tetramers; dsDNA enters through RuvA and exits via RuvB. An RuvB hexamer assembles on each DNA strand where it exits the tetramer. Each RuvB hexamer is contacted by two RuvA subunits (via domain III) on 2 adjacent RuvB subunits; this complex drives branch migration. In the full resolvosome a probable DNA-RuvA(4)-RuvB(12)-RuvC(2) complex forms which resolves the HJ.

The protein localises to the cytoplasm. The enzyme catalyses ATP + H2O = ADP + phosphate + H(+). In terms of biological role, the RuvA-RuvB-RuvC complex processes Holliday junction (HJ) DNA during genetic recombination and DNA repair, while the RuvA-RuvB complex plays an important role in the rescue of blocked DNA replication forks via replication fork reversal (RFR). RuvA specifically binds to HJ cruciform DNA, conferring on it an open structure. The RuvB hexamer acts as an ATP-dependent pump, pulling dsDNA into and through the RuvAB complex. RuvB forms 2 homohexamers on either side of HJ DNA bound by 1 or 2 RuvA tetramers; 4 subunits per hexamer contact DNA at a time. Coordinated motions by a converter formed by DNA-disengaged RuvB subunits stimulates ATP hydrolysis and nucleotide exchange. Immobilization of the converter enables RuvB to convert the ATP-contained energy into a lever motion, pulling 2 nucleotides of DNA out of the RuvA tetramer per ATP hydrolyzed, thus driving DNA branch migration. The RuvB motors rotate together with the DNA substrate, which together with the progressing nucleotide cycle form the mechanistic basis for DNA recombination by continuous HJ branch migration. Branch migration allows RuvC to scan DNA until it finds its consensus sequence, where it cleaves and resolves cruciform DNA. The protein is Holliday junction branch migration complex subunit RuvB of Burkholderia ambifaria (strain MC40-6).